The primary structure comprises 426 residues: Histidinol dehydrogenase (426 aa).

Positions 126, 188, and 210 each coordinate NAD(+). Substrate-binding residues include serine 233, glutamine 255, and histidine 258. Residues glutamine 255 and histidine 258 each contribute to the Zn(2+) site. Catalysis depends on proton acceptor residues glutamate 323 and histidine 324. Positions 324, 357, 411, and 416 each coordinate substrate. Aspartate 357 is a Zn(2+) binding site. Residue histidine 416 participates in Zn(2+) binding.

The protein belongs to the histidinol dehydrogenase family. Zn(2+) serves as cofactor.

It catalyses the reaction L-histidinol + 2 NAD(+) + H2O = L-histidine + 2 NADH + 3 H(+). It participates in amino-acid biosynthesis; L-histidine biosynthesis; L-histidine from 5-phospho-alpha-D-ribose 1-diphosphate: step 9/9. Its function is as follows. Catalyzes the sequential NAD-dependent oxidations of L-histidinol to L-histidinaldehyde and then to L-histidine. The protein is Histidinol dehydrogenase of Heliobacterium mobile (Heliobacillus mobilis).